A 324-amino-acid polypeptide reads, in one-letter code: Acetyl-coenzyme A carboxylase carboxyl transferase subunit alpha (324 aa).

The 255-residue stretch at 42-296 folds into the CoA carboxyltransferase C-terminal domain; sequence RLSELEEEVY…EKALTRLAEK (255 aa).

This sequence belongs to the AccA family. As to quaternary structure, acetyl-CoA carboxylase is a heterohexamer composed of biotin carboxyl carrier protein (AccB), biotin carboxylase (AccC) and two subunits each of ACCase subunit alpha (AccA) and ACCase subunit beta (AccD).

Its subcellular location is the cytoplasm. The enzyme catalyses N(6)-carboxybiotinyl-L-lysyl-[protein] + acetyl-CoA = N(6)-biotinyl-L-lysyl-[protein] + malonyl-CoA. It participates in lipid metabolism; malonyl-CoA biosynthesis; malonyl-CoA from acetyl-CoA: step 1/1. Its function is as follows. Component of the acetyl coenzyme A carboxylase (ACC) complex. First, biotin carboxylase catalyzes the carboxylation of biotin on its carrier protein (BCCP) and then the CO(2) group is transferred by the carboxyltransferase to acetyl-CoA to form malonyl-CoA. This chain is Acetyl-coenzyme A carboxylase carboxyl transferase subunit alpha, found in Shouchella clausii (strain KSM-K16) (Alkalihalobacillus clausii).